Consider the following 123-residue polypeptide: UPF0102 protein CLJ_B2665 (123 aa).

This sequence belongs to the UPF0102 family.

The sequence is that of UPF0102 protein CLJ_B2665 from Clostridium botulinum (strain 657 / Type Ba4).